A 647-amino-acid polypeptide reads, in one-letter code: Threonine--tRNA ligase (647 aa).

Residues 1 to 61 (MIKITFPDGA…EEDGSIEIVT (61 aa)) enclose the TGS domain. The catalytic stretch occupies residues 240-538 (DHRKLGKELD…LIETYKGAFP (299 aa)). Cys-334, His-385, and His-515 together coordinate Zn(2+).

Belongs to the class-II aminoacyl-tRNA synthetase family. As to quaternary structure, homodimer. It depends on Zn(2+) as a cofactor.

The protein localises to the cytoplasm. It catalyses the reaction tRNA(Thr) + L-threonine + ATP = L-threonyl-tRNA(Thr) + AMP + diphosphate + H(+). Catalyzes the attachment of threonine to tRNA(Thr) in a two-step reaction: L-threonine is first activated by ATP to form Thr-AMP and then transferred to the acceptor end of tRNA(Thr). Also edits incorrectly charged L-seryl-tRNA(Thr). The protein is Threonine--tRNA ligase of Streptococcus pyogenes serotype M49 (strain NZ131).